The chain runs to 714 residues: MSRIIMLIPTGTSVGLTSVSLGVIRAMERKGVRLSVFKPIAQPRTGGDAPDQTTTIVRANSSTTTAAEPLKMSYVEGLLSSNQKDVLMEEIVANYHANTKDAEVVLVEGLVPTRKHQFAQSLNYEIAKTLNAEIVFVMSQGTDTPEQLKERIELTRNSFGGAKNTNITGVIVNKLNAPVDEQGRTRPDLSEIFDDSSKAKVNNVDPAKLQESSPLPVLGAVPWSFDLIATRAIDMARHLNATIINEGDINTRRVKSVTFCARSIPHMLEHFRAGSLLVTSADRPDVLVAACLAAMNGVEIGALLLTGGYEMDARISKLCERAFATGLPVFMVNTNTWQTSLSLQSFNLEVPVDDHERIEKVQEYVANYINADWIESLTATSERSRRLSPPAFRYQLTELARKAGKRIVLPEGDEPRTVKAAAICAERGIATCVLLGNPAEINRVAASQGVELGAGIEIVDPEVVRESYVGRLVELRKNKGMTETVAREQLEDNVVLGTLMLEQDEVDGLVSGAVHTTANTIRPPLQLIKTAPGSSLVSSVFFMLLPEQVYVYGDCAINPDPTAEQLAEIAIQSADSAAAFGIEPRVAMLSYSTGTSGAGSDVEKVREATRLAQEKRPDLMIDGPLQYDAAVMADVAKSKAPNSPVAGRATVFIFPDLNTGNTTYKAVQRSADLISIGPMLQGMRKPVNDLSRGALVDDIVYTIALTAIQSAQQQ.

The segment at Ala391–Gln714 is phosphate acetyltransferase.

The protein in the N-terminal section; belongs to the CobB/CobQ family. In the C-terminal section; belongs to the phosphate acetyltransferase and butyryltransferase family. As to quaternary structure, homohexamer.

It is found in the cytoplasm. It catalyses the reaction acetyl-CoA + phosphate = acetyl phosphate + CoA. It participates in metabolic intermediate biosynthesis; acetyl-CoA biosynthesis; acetyl-CoA from acetate: step 2/2. Its activity is regulated as follows. Inhibited by NADH and ATP. Pyruvate and PEP act as activators of the acetyl phosphate forming reaction while inhibiting the formation of acetyl-CoA. Its function is as follows. Involved in acetate metabolism. Catalyzes the reversible interconversion of acetyl-CoA and acetyl phosphate. The direction of the overall reaction changes depending on growth conditions. On minimal medium acetyl-CoA is generated. In rich medium acetyl-CoA is converted to acetate and allowing the cell to dump the excess of acetylation potential in exchange for energy in the form of ATP. The main pathway for acetate production during exponential phase. This is Phosphate acetyltransferase (pta) from Escherichia coli (strain K12).